The primary structure comprises 201 residues: ATP-dependent Clp protease proteolytic subunit (201 aa).

Ser-105 functions as the Nucleophile in the catalytic mechanism. The active site involves His-130.

The protein belongs to the peptidase S14 family. In terms of assembly, fourteen ClpP subunits assemble into 2 heptameric rings which stack back to back to give a disk-like structure with a central cavity, resembling the structure of eukaryotic proteasomes.

Its subcellular location is the cytoplasm. It catalyses the reaction Hydrolysis of proteins to small peptides in the presence of ATP and magnesium. alpha-casein is the usual test substrate. In the absence of ATP, only oligopeptides shorter than five residues are hydrolyzed (such as succinyl-Leu-Tyr-|-NHMec, and Leu-Tyr-Leu-|-Tyr-Trp, in which cleavage of the -Tyr-|-Leu- and -Tyr-|-Trp bonds also occurs).. Its function is as follows. Cleaves peptides in various proteins in a process that requires ATP hydrolysis. Has a chymotrypsin-like activity. Plays a major role in the degradation of misfolded proteins. This is ATP-dependent Clp protease proteolytic subunit from Aquifex aeolicus (strain VF5).